The sequence spans 450 residues: UDP-N-acetylmuramoylalanine--D-glutamate ligase (450 aa).

111–117 (GTNGKST) lines the ATP pocket.

Belongs to the MurCDEF family.

The protein localises to the cytoplasm. The catalysed reaction is UDP-N-acetyl-alpha-D-muramoyl-L-alanine + D-glutamate + ATP = UDP-N-acetyl-alpha-D-muramoyl-L-alanyl-D-glutamate + ADP + phosphate + H(+). It participates in cell wall biogenesis; peptidoglycan biosynthesis. Its function is as follows. Cell wall formation. Catalyzes the addition of glutamate to the nucleotide precursor UDP-N-acetylmuramoyl-L-alanine (UMA). This Rickettsia bellii (strain RML369-C) protein is UDP-N-acetylmuramoylalanine--D-glutamate ligase.